The chain runs to 467 residues: Acetaldehyde dehydrogenase (acetylating) EutE (467 aa).

Positions 1 to 19 are targets protein to the BMC; it reads MNQQDIEQVVKAVLLKMKD.

The protein belongs to the EutE/PduP family. Interacts with EutS, which targets it to the interior of the BMC.

The protein resides in the bacterial microcompartment. The catalysed reaction is acetaldehyde + NAD(+) + CoA = acetyl-CoA + NADH + H(+). Its pathway is amine and polyamine degradation; ethanolamine degradation. Acts as the second step in ethanolamine degradation by converting acetaldehyde into acetyl-CoA. Has a very strong preference for NAD(+) over NADP(+) in both catalytic directions. May play a role in bacterial microcompartment (BMC) assembly or maintenance. Directly targeted to the BMC. In terms of biological role, expression of the eut operon allows this bacteria to use ethanolamine (EA) as a carbon, nitrogen and energy source. It relies on cobalamin (vitamin B12) both as a cofactor for the ethanolamine ammonia-lyase (EAL) activity and to induce the operon. EA enhances bacterial survival in macrophages in a concentration-dependent manner, suggesting it is an important nutrient during infection. The sequence is that of Acetaldehyde dehydrogenase (acetylating) EutE from Salmonella typhimurium (strain LT2 / SGSC1412 / ATCC 700720).